Here is a 126-residue protein sequence, read N- to C-terminus: Small ribosomal subunit protein uS11 (126 aa).

The protein belongs to the universal ribosomal protein uS11 family. As to quaternary structure, part of the 30S ribosomal subunit. Interacts with proteins S7 and S18. Binds to IF-3.

In terms of biological role, located on the platform of the 30S subunit, it bridges several disparate RNA helices of the 16S rRNA. Forms part of the Shine-Dalgarno cleft in the 70S ribosome. The protein is Small ribosomal subunit protein uS11 of Ehrlichia chaffeensis (strain ATCC CRL-10679 / Arkansas).